The primary structure comprises 323 residues: Acetyl-coenzyme A carboxylase carboxyl transferase subunit alpha (323 aa).

One can recognise a CoA carboxyltransferase C-terminal domain in the interval 40–293; the sequence is LAEKSLQLTK…RKALAESLKT (254 aa).

It belongs to the AccA family. As to quaternary structure, acetyl-CoA carboxylase is a heterohexamer composed of biotin carboxyl carrier protein (AccB), biotin carboxylase (AccC) and two subunits each of ACCase subunit alpha (AccA) and ACCase subunit beta (AccD).

It localises to the cytoplasm. The enzyme catalyses N(6)-carboxybiotinyl-L-lysyl-[protein] + acetyl-CoA = N(6)-biotinyl-L-lysyl-[protein] + malonyl-CoA. Its pathway is lipid metabolism; malonyl-CoA biosynthesis; malonyl-CoA from acetyl-CoA: step 1/1. Its function is as follows. Component of the acetyl coenzyme A carboxylase (ACC) complex. First, biotin carboxylase catalyzes the carboxylation of biotin on its carrier protein (BCCP) and then the CO(2) group is transferred by the carboxyltransferase to acetyl-CoA to form malonyl-CoA. The sequence is that of Acetyl-coenzyme A carboxylase carboxyl transferase subunit alpha from Polynucleobacter necessarius subsp. necessarius (strain STIR1).